Reading from the N-terminus, the 41-residue chain is Virescein (41 aa).

The residue at position 41 (histidine 41) is a Histidine amide.

In terms of assembly, monomer. Hemolymph.

The protein resides in the secreted. Its function is as follows. Has antibacterial activity against Gram-positive and Gram-negative bacteria. The protein is Virescein of Heliothis virescens (Tobacco budworm moth).